The sequence spans 297 residues: Protein-methionine-sulfoxide reductase catalytic subunit MsrP (297 aa).

The segment at residues 1–35 (MLITPEKLYKQRRNFLKLGAGALISSSVLASKLSA) is a signal peptide (tat-type signal). Residues 62 to 63 (YE), cysteine 116, threonine 151, asparagine 201, arginine 206, and 217 to 219 (SIK) contribute to the Mo-molybdopterin site.

This sequence belongs to the MsrP family. As to quaternary structure, heterodimer of a catalytic subunit (MsrP) and a heme-binding subunit (MsrQ). It depends on Mo-molybdopterin as a cofactor. Post-translationally, predicted to be exported by the Tat system. The position of the signal peptide cleavage has not been experimentally proven.

It is found in the periplasm. The catalysed reaction is L-methionyl-[protein] + a quinone + H2O = L-methionyl-(S)-S-oxide-[protein] + a quinol. It catalyses the reaction L-methionyl-[protein] + a quinone + H2O = L-methionyl-(R)-S-oxide-[protein] + a quinol. Part of the MsrPQ system that repairs oxidized periplasmic proteins containing methionine sulfoxide residues (Met-O), using respiratory chain electrons. Thus protects these proteins from oxidative-stress damage caused by reactive species of oxygen and chlorine generated by the host defense mechanisms. MsrPQ is essential for the maintenance of envelope integrity under bleach stress, rescuing a wide series of structurally unrelated periplasmic proteins from methionine oxidation. The catalytic subunit MsrP is non-stereospecific, being able to reduce both (R-) and (S-) diastereoisomers of methionine sulfoxide. In Campylobacter jejuni subsp. jejuni serotype O:2 (strain ATCC 700819 / NCTC 11168), this protein is Protein-methionine-sulfoxide reductase catalytic subunit MsrP.